The chain runs to 826 residues: Protein FAM171B (826 aa).

An N-terminal signal peptide occupies residues 1–32 (MARLCRRVPCTLLLGLAVVLLKARLVPAAARA). The Extracellular portion of the chain corresponds to 33-353 (ELSRSDLSLI…DSKDITAYHT (321 aa)). Positions 52–71 (QQQQQKQLEEAEEERTEVPG) are disordered. N-linked (GlcNAc...) asparagine glycosylation is found at asparagine 108, asparagine 113, asparagine 213, and asparagine 268. Residues 354–374 (VFLTAILGGTIVIVIGFFAVL) traverse the membrane as a helical segment. The Cytoplasmic portion of the chain corresponds to 375–826 (LCYCRDKCGT…REERPLIPIN (452 aa)). 3 disordered regions span residues 429–448 (NAKNSSYSPQKKEPSKAETE), 474–493 (QNNYSRNPTQSLEPNVGSKQ), and 774–826 (HPGE…IPIN). The segment covering 438-448 (QKKEPSKAETE) has biased composition (basic and acidic residues). Residues 474–486 (QNNYSRNPTQSLE) show a composition bias toward polar residues. Positions 774 to 786 (HPGEESPGRKSTV) are enriched in basic and acidic residues. At serine 794 the chain carries Phosphoserine. Positions 805–826 (AKRDSKTNIWKKREERPLIPIN) are enriched in basic and acidic residues.

This sequence belongs to the FAM171 family.

The protein localises to the cytoplasmic granule. Its subcellular location is the membrane. This chain is Protein FAM171B (FAM171B), found in Homo sapiens (Human).